Consider the following 526-residue polypeptide: Cell adhesion molecule CEACAM1 (526 aa).

An N-terminal signal peptide occupies residues 1–34; sequence MGHLSAPLHRVRVPWQGLLLTASLLTFWNPPTTA. The residue at position 35 (glutamine 35) is a Pyrrolidone carboxylic acid. In terms of domain architecture, Ig-like V-type spans 35 to 142; that stretch reads QLTTESMPFN…EATGQFHVYP (108 aa). The Extracellular segment spans residues 35-428; sequence QLTTESMPFN…LPQENGLSPG (394 aa). Residues 39-142 are required for homophilic binding; that stretch reads ESMPFNVAEG…EATGQFHVYP (104 aa). 20 N-linked (GlcNAc...) asparagine glycosylation sites follow: asparagine 104, asparagine 111, asparagine 115, asparagine 152, asparagine 182, asparagine 197, asparagine 208, asparagine 224, asparagine 232, asparagine 254, asparagine 274, asparagine 288, asparagine 292, asparagine 302, asparagine 309, asparagine 345, asparagine 351, asparagine 363, asparagine 378, and asparagine 405. 3 consecutive Ig-like C2-type domains span residues 145-232, 237-317, and 323-413; these read PKPS…VTLN, PDTP…KTII, and PVVA…IMLN. A disulfide bond links cysteine 167 and cysteine 215. A disulfide bond links cysteine 259 and cysteine 299. A disulfide bridge connects residues cysteine 348 and cysteine 396. Residues 429-452 traverse the membrane as a helical segment; that stretch reads AIAGIVIGVVALVALIAVALACFL. Residues 450 to 462 form an interaction with calmodulin region; it reads CFLHFGKTGRASD. An interaction with FLNA region spans residues 452–526; it reads LHFGKTGRAS…EIIYSEVKKQ (75 aa). At 453-526 the chain is on the cytoplasmic side; that stretch reads HFGKTGRASD…EIIYSEVKKQ (74 aa). A compositionally biased stretch (basic and acidic residues) spans 461 to 482; sequence SDQRDLTEHKPSVSNHTQDHSN. Positions 461–513 are disordered; it reads SDQRDLTEHKPSVSNHTQDHSNDPPNKMNEVTYSTLNFEAQQPTQPTSASPSL. Polar residues predominate over residues 489–513; the sequence is NEVTYSTLNFEAQQPTQPTSASPSL. A required for interaction with PTPN11 and PTPN6 and for control of phosphorylation level region spans residues 489-526; the sequence is NEVTYSTLNFEAQQPTQPTSASPSLTATEIIYSEVKKQ. Tyrosine 493 carries the phosphotyrosine; by SRC, LCK, INSR and EGFR modification. At serine 508 the chain carries Phosphoserine. At tyrosine 520 the chain carries Phosphotyrosine; by INSR, SRC and LCK. Residues 520–523 form an essential for interaction with PTPN11 and PTPN6 region; it reads YSEV.

This sequence belongs to the immunoglobulin superfamily. CEA family. Monomer. Oligomer. Heterodimer. Homodimer. Cis-dimer/oligomer (via Ig-like C2-type and/or via cytoplasmic domains); induced by trans-homophilic cell adhesion through an allosteric mechanism transmitted by the Ig-like V-type domain, and is regulated by intracellular calcium and calmodulin. Interacts (via cytoplasmic domain) with calmodulin in a calcium dependent manner; reduces homophilic cell adhesion through dissociation of dimer. Isoform 1 interacts (via cytoplasmic domain) with PTPN11 (preferentially) and PTPN6; cis-homodimer form is preferred; this interaction is decreased by formation of Isoform 1 /Isoform 8 cis-heterodimers and is dependent on the monomer/dimer equilibrium; this interaction is phosphorylation-dependent. Isoform 1 interacts with LYN. Isoform 1 interacts (via cytoplasmic domain) with SRC (via SH2 domain); this interaction is regulated by trans-homophilic cell adhesion. Isoform 1 interacts (via cytoplasmic domain) with LCK; mediates phosphorylation at Tyr-493 and Tyr-520 resulting in PTPN6 association. Isoform 1 interacts with PTPN6; this interaction is phosphorylation-dependent and causes a profound decrease in TCR stimulation-induced CD247 and ZAP70 phosphorylation. Isoform 1 interacts with TCR/CD3 complex through TCR beta chain and CD3E; colocalizes at the cell surface and upon stimulation of the TCR/CD3 complex recruits PTPN6 in the TCR/CD3 complex, resulting in dephosphorylation of CD247 and ZAP70. Isoform 1 interacts (via cytoplasmic domain) with SHC1 (via SH2 domain); SHC1 mediates interaction with INSR or EGFR in a Ser-508 phosphorylation-dependent manner. Isoform 1 interacts with EGFR; the interaction is indirect. Isoform 1 interacts with CSF3R; down-regulates the CSF3R-STAT3 pathway through recruitment of PTPN6 that dephosphorylates CSF3R. Isoform 1 (phosphorylated form) interacts with TLR4 and SYK; recruits PTPN6 that dephosphorylates SYK, reducing the production of reactive oxygen species (ROS) and lysosome disruption, leading to a reduction of the inflammasome activity. Isoform 1 interacts with FLNA; inhibits cell migration and cell scattering by interfering with the interaction of FLNA with RALA. Isoform 1 interacts (via cytoplasmic domain) with PXN; the interaction is phosphotyrosyl-dependent. Isoform 1 interacts with KLRK1; recruits PTPN6 that dephosphorylates VAV1. Isoform 1 interacts with CEACAM8. Isoform 1 interacts with FASN; this interaction is insulin and phosphorylation-dependent; reduces fatty-acid synthase activity. Interacts (via Ig-like V-type) with HAVCR2 (via Ig-like V-type); facilitates the maturation and cell surface expression of HAVCR2 thereby regulating T cell tolerance induction. Isoform 8 interacts (via the cytoplasmic domain) with ANXA2; this interaction is regulated by phosphorylation and appears in the AIIt complex. Interacts (via Lewis X moieties) with CD209 (via C-type lectin domain); this interaction is regulated by the glycosylation pattern of CEACAM1 on cell types and regulates contact between dendritic cells and neutrophils. Phosphorylated on serine and tyrosine. Isoform 1 is phosphorylated on tyrosine by Src family kinases like SRC and LCK and by receptor like CSF3R, EGFR and INSR upon stimulation. Phosphorylated at Ser-508; mediates activity. Phosphorylated at Tyr-493; regulates activity. Phosphorylated at Tyr-493 by EGFR and INSR upon stimulation; this phosphorylation is Ser-508-phosphorylation-dependent; mediates cellular internalization; increases interaction with downstream proteins like SHC1 and FASN. Phosphorylated at Tyr-493 and Tyr-520 by LCK; mediates PTPN6 association and is regulated by homophilic ligation of CEACAM1 in the absence of T cell activation. Phosphorylated at Tyr-520; mediates interaction with PTPN11. Post-translationally, phosphorylated on serine and threonine. In terms of tissue distribution, expressed in columnar epithelial cells of the colon (at protein level). The predominant forms expressed by T cells are those containing a long cytoplasmic domain. Expressed in granulocytes and lymphocytes. Leukocytes only express isoforms 6 and isoform 1.

The protein localises to the cell membrane. It localises to the lateral cell membrane. It is found in the apical cell membrane. Its subcellular location is the basal cell membrane. The protein resides in the cell junction. The protein localises to the adherens junction. It localises to the secreted. It is found in the cytoplasmic vesicle. Its subcellular location is the secretory vesicle membrane. The protein resides in the cell projection. The protein localises to the microvillus membrane. Functionally, cell adhesion protein that mediates homophilic cell adhesion in a calcium-independent manner. Plays a role as coinhibitory receptor in immune response, insulin action and also functions as an activator during angiogenesis. Its coinhibitory receptor function is phosphorylation- and PTPN6 -dependent, which in turn, suppress signal transduction of associated receptors by dephosphorylation of their downstream effectors. Plays a role in immune response, of T cells, natural killer (NK) and neutrophils. Upon TCR/CD3 complex stimulation, inhibits TCR-mediated cytotoxicity by blocking granule exocytosis by mediating homophilic binding to adjacent cells, allowing interaction with and phosphorylation by LCK and interaction with the TCR/CD3 complex which recruits PTPN6 resulting in dephosphorylation of CD247 and ZAP70. Also inhibits T cell proliferation and cytokine production through inhibition of JNK cascade and plays a crucial role in regulating autoimmunity and anti-tumor immunity by inhibiting T cell through its interaction with HAVCR2. Upon natural killer (NK) cells activation, inhibit KLRK1-mediated cytolysis of CEACAM1-bearing tumor cells by trans-homophilic interactions with CEACAM1 on the target cell and lead to cis-interaction between CEACAM1 and KLRK1, allowing PTPN6 recruitment and then VAV1 dephosphorylation. Upon neutrophils activation negatively regulates IL1B production by recruiting PTPN6 to a SYK-TLR4-CEACAM1 complex, that dephosphorylates SYK, reducing the production of reactive oxygen species (ROS) and lysosome disruption, which in turn, reduces the activity of the inflammasome. Down-regulates neutrophil production by acting as a coinhibitory receptor for CSF3R by down-regulating the CSF3R-STAT3 pathway through recruitment of PTPN6 that dephosphorylates CSF3R. Also regulates insulin action by promoting INS clearance and regulating lipogenesis in liver through regulating insulin signaling. Upon INS stimulation, undergoes phosphorylation by INSR leading to INS clearance by increasing receptor-mediated insulin endocytosis. This inernalization promotes interaction with FASN leading to receptor-mediated insulin degradation and to reduction of FASN activity leading to negative regulation of fatty acid synthesis. INSR-mediated phosphorylation also provokes a down-regulation of cell proliferation through SHC1 interaction resulting in decrease coupling of SHC1 to the MAPK3/ERK1-MAPK1/ERK2 and phosphatidylinositol 3-kinase pathways. Functions as activator in angiogenesis by promoting blood vessel remodeling through endothelial cell differentiation and migration and in arteriogenesis by increasing the number of collateral arteries and collateral vessel calibers after ischemia. Also regulates vascular permeability through the VEGFR2 signaling pathway resulting in control of nitric oxide production. Down-regulates cell growth in response to EGF through its interaction with SHC1 that mediates interaction with EGFR resulting in decrease coupling of SHC1 to the MAPK3/ERK1-MAPK1/ERK2 pathway. Negatively regulates platelet aggregation by decreasing platelet adhesion on type I collagen through the GPVI-FcRgamma complex. Inhibits cell migration and cell scattering through interaction with FLNA; interferes with the interaction of FLNA with RALA. Mediates bile acid transport activity in a phosphorylation dependent manner. Negatively regulates osteoclastogenesis. Cell adhesion protein that mediates homophilic cell adhesion in a calcium-independent manner. Promotes populations of T cells regulating IgA production and secretion associated with control of the commensal microbiota and resistance to enteropathogens. This Homo sapiens (Human) protein is Cell adhesion molecule CEACAM1.